Reading from the N-terminus, the 247-residue chain is Carbonic anhydrase (247 aa).

The signal sequence occupies residues 1–34 (MMFNKQIFTILILSLSLALAGSGCISEGAEDNVA). Residue 93-95 (RSD) coordinates substrate. E96 acts as the Proton donor/acceptor in catalysis. 109 to 110 (QD) lines the substrate pocket. Residue H115 coordinates Zn(2+). E118 is an active-site residue. Zn(2+)-binding residues include H151 and H156. A substrate-binding site is contributed by N236.

This sequence belongs to the gamma-class carbonic anhydrase family. Homotrimer. Zn(2+) is required as a cofactor.

Its subcellular location is the secreted. It catalyses the reaction hydrogencarbonate + H(+) = CO2 + H2O. In terms of biological role, reversible hydration of carbon dioxide. Important for growth on acetate. As a probably extracellular enzyme, it may support a H(+)/CH(3)COO(-) symport mechanism and/or conversion of CO(2) to HCO(3)(-), removing excess CO(2) produced by growth on acetate. The protein is Carbonic anhydrase of Methanosarcina thermophila (strain ATCC 43570 / DSM 1825 / OCM 12 / VKM B-1830 / TM-1).